Reading from the N-terminus, the 259-residue chain is UPF0014 membrane protein slr1647 (259 aa).

Transmembrane regions (helical) follow at residues 4–24 (ALIE…GAAI), 34–54 (LTGQ…VVGY), 55–75 (FLAV…LAIM), 98–118 (LWLS…VVII), 128–148 (YLIP…SLAG), 195–215 (MMVV…LAGG), and 225–245 (ILIM…VTAT).

The protein belongs to the UPF0014 family.

It localises to the cell membrane. The polypeptide is UPF0014 membrane protein slr1647 (Synechocystis sp. (strain ATCC 27184 / PCC 6803 / Kazusa)).